The chain runs to 427 residues: Tyrosine--tRNA ligase (427 aa).

Tyr-33 serves as a coordination point for L-tyrosine. The short motif at 38 to 47 is the 'HIGH' region element; that stretch reads PTASSLTIGN. 2 residues coordinate L-tyrosine: Tyr-168 and Gln-172. The 'KMSKS' region signature appears at 228–232; it reads KFGKS. Lys-231 lines the ATP pocket. The 67-residue stretch at 361–427 folds into the S4 RNA-binding domain; it reads LDLLSTLTNS…KKNYYLLRFN (67 aa).

Belongs to the class-I aminoacyl-tRNA synthetase family. TyrS type 1 subfamily. Homodimer.

Its subcellular location is the cytoplasm. The catalysed reaction is tRNA(Tyr) + L-tyrosine + ATP = L-tyrosyl-tRNA(Tyr) + AMP + diphosphate + H(+). Its function is as follows. Catalyzes the attachment of tyrosine to tRNA(Tyr) in a two-step reaction: tyrosine is first activated by ATP to form Tyr-AMP and then transferred to the acceptor end of tRNA(Tyr). The chain is Tyrosine--tRNA ligase from Cytophaga hutchinsonii (strain ATCC 33406 / DSM 1761 / CIP 103989 / NBRC 15051 / NCIMB 9469 / D465).